The chain runs to 87 residues: DNA-directed RNA polymerase subunit Rpo5 (87 aa).

The protein belongs to the archaeal Rpo5/eukaryotic RPB5 RNA polymerase subunit family. Part of the RNA polymerase complex.

Its subcellular location is the cytoplasm. The enzyme catalyses RNA(n) + a ribonucleoside 5'-triphosphate = RNA(n+1) + diphosphate. In terms of biological role, DNA-dependent RNA polymerase (RNAP) catalyzes the transcription of DNA into RNA using the four ribonucleoside triphosphates as substrates. The protein is DNA-directed RNA polymerase subunit Rpo5 of Thermoplasma volcanium (strain ATCC 51530 / DSM 4299 / JCM 9571 / NBRC 15438 / GSS1).